The sequence spans 124 residues: Fluoride-specific ion channel FluC (124 aa).

4 helical membrane passes run 1–21 (MFNL…RHLT), 35–55 (WGTM…IAIL), 66–86 (LFVA…SLDF), and 99–119 (FGYA…GLWL). Gly74 and Thr77 together coordinate Na(+).

Belongs to the fluoride channel Fluc/FEX (TC 1.A.43) family.

Its subcellular location is the cell inner membrane. The catalysed reaction is fluoride(in) = fluoride(out). Na(+) is not transported, but it plays an essential structural role and its presence is essential for fluoride channel function. In terms of biological role, fluoride-specific ion channel. Important for reducing fluoride concentration in the cell, thus reducing its toxicity. This Mesorhizobium japonicum (strain LMG 29417 / CECT 9101 / MAFF 303099) (Mesorhizobium loti (strain MAFF 303099)) protein is Fluoride-specific ion channel FluC.